Consider the following 463-residue polypeptide: MMNISNVSIALYLCTLFAFVSSDSPEAMRDLVTNFPGQPKVSFRHYAGYVTVNIISGRALFYWFFEAMTHPNVKPLVLWLNGGPGCSSVGYGATQEIGPFLVDNKGNSLKFNPYAWNKEANILFLESPAGVGFSYSNTSSDYRKLGDDFTARDSYTFLQKWFLRFPAYKEKDFFIAGESYAGKYVPELAEVIYDKNKDNENLSLHINLKGILLGNPLTSYAEDWTGWVDYAWNHAVVSDETYRVIKQSCNFSSDTTWDVKDCKEGVDEILKQYKEIDQFSLYTPICMHHSSKVDSYANYKTTIPRLFDGFDPCLDDYAKVFYNRADVQKALHATDGVHLKNWTICNDDILNHWNWTDSKRSVLPIYKKLIAGGFRVWVYSGDTDGRVPVLSTRYCINKLELPIKTAWRPWYHETQVSGWFQEYEGLTFATFRGAGHDVPSFKPSESLAFFSAFLNGVPPPLSR.

The signal sequence occupies residues 1 to 22 (MMNISNVSIALYLCTLFAFVSS). Cystine bridges form between cysteine 86–cysteine 345, cysteine 249–cysteine 262, and cysteine 286–cysteine 313. Asparagine 137 carries N-linked (GlcNAc...) asparagine glycosylation. The active site involves serine 179. 2 N-linked (GlcNAc...) asparagine glycosylation sites follow: asparagine 201 and asparagine 250. Residues asparagine 341 and asparagine 354 are each glycosylated (N-linked (GlcNAc...) asparagine). Residues aspartate 384 and histidine 436 contribute to the active site.

This sequence belongs to the peptidase S10 family. Expressed in flowers.

The protein resides in the secreted. In terms of biological role, probable carboxypeptidase. The chain is Serine carboxypeptidase-like 32 (SCPL32) from Arabidopsis thaliana (Mouse-ear cress).